The primary structure comprises 256 residues: MHCYKLTIAYDGTNYSGWQIQPNASSIQQKIQEALCILLKKEKVVLVGSGRTDAGVHAKGQVAHFHFQDYIDLSRLHVSLNGLLPRDIRIKAVEPVSPRFHSQYSAIRKEYHYYLHLNKVMDPFQRLYSWHFQRKIDVNILKKAAILFTGTHDFTSFANEAHRGTAAKNPVRTLYRLDIKPNEGGLRLEFEGDGFLYKMVRNIVGTLMDVASHKRAIEEINQIFAAKNRRQASLAAPPEGLFLIQVFYENENGCLD.

D53 acts as the Nucleophile in catalysis. Y111 serves as a coordination point for substrate.

Belongs to the tRNA pseudouridine synthase TruA family. As to quaternary structure, homodimer.

The catalysed reaction is uridine(38/39/40) in tRNA = pseudouridine(38/39/40) in tRNA. In terms of biological role, formation of pseudouridine at positions 38, 39 and 40 in the anticodon stem and loop of transfer RNAs. The protein is tRNA pseudouridine synthase A 1 of Protochlamydia amoebophila (strain UWE25).